The sequence spans 137 residues: Large ribosomal subunit protein uL16 (137 aa).

It belongs to the universal ribosomal protein uL16 family. In terms of assembly, part of the 50S ribosomal subunit.

Binds 23S rRNA and is also seen to make contacts with the A and possibly P site tRNAs. In Legionella pneumophila (strain Paris), this protein is Large ribosomal subunit protein uL16.